The primary structure comprises 210 residues: Prolactin-2 (210 aa).

The N-terminal stretch at 1–23 (MARRSQGTKLHLAVLCLVVSCHA) is a signal peptide. Intrachain disulfides connect cysteine 69/cysteine 183 and cysteine 200/cysteine 210.

It belongs to the somatotropin/prolactin family.

The protein localises to the secreted. The polypeptide is Prolactin-2 (prl2) (Oncorhynchus tshawytscha (Chinook salmon)).